The chain runs to 346 residues: DNA repair protein XRCC3 (346 aa).

N-acetylmethionine is present on Met1. Residue 107–114 participates in ATP binding; it reads GRSSAGKT.

The protein belongs to the RecA family. RAD51 subfamily. In terms of assembly, interacts with RAD51C and RAD51. Part of the CX3 complex consisting of RAD51C and XRCC3; the complex has a ring-like structure arranged into a flat disk around a central channel; CX3 can interact with RAD51 in vitro. Forms a complex with FANCD2, BRCA2 and phosphorylated FANCG. Interacts with SWSAP1 and ZSWIM7; involved in homologous recombination repair. Interacts directly with PALB2 which may serve as a scaffold for a HR complex containing PALB2, BRCA2, RAD51C, RAD51 and XRCC3.

The protein localises to the nucleus. The protein resides in the cytoplasm. It is found in the perinuclear region. It localises to the mitochondrion. Involved in the homologous recombination repair (HRR) pathway of double-stranded DNA, thought to repair chromosomal fragmentation, translocations and deletions. Part of the RAD51 paralog protein complex CX3 which acts in the BRCA1-BRCA2-dependent HR pathway. Upon DNA damage, CX3 acts downstream of RAD51 recruitment; the complex binds predominantly to the intersection of the four duplex arms of the Holliday junction (HJ) and to junctions of replication forks. Involved in HJ resolution and thus in processing HR intermediates late in the DNA repair process; the function may be linked to the CX3 complex and seems to involve GEN1 during mitotic cell cycle progression. Part of a PALB2-scaffolded HR complex containing BRCA2 and RAD51C and which is thought to play a role in DNA repair by HR. Plays a role in regulating mitochondrial DNA copy number under conditions of oxidative stress in the presence of RAD51 and RAD51C. This is DNA repair protein XRCC3 (XRCC3) from Homo sapiens (Human).